Consider the following 214-residue polypeptide: Fibroblast growth factor 8 (214 aa).

The N-terminal stretch at 1–22 is a signal peptide; that stretch reads MDPCSSLFSYVFMHLFVLCLQA. N-linked (GlcNAc...) asparagine glycosylation is found at Asn-31, Asn-137, and Asn-207.

It belongs to the heparin-binding growth factors family.

The protein localises to the secreted. Its function is as follows. Plays an important role in the regulation of embryonic development, cell proliferation, cell differentiation and cell migration. Involved in initiation, outgrowth and patterning of the limbs. The sequence is that of Fibroblast growth factor 8 (FGF8) from Gallus gallus (Chicken).